The chain runs to 244 residues: 5'-nucleotidase SurE 2 (244 aa).

Asp-8, Asp-9, Ser-39, and Asn-96 together coordinate a divalent metal cation.

The protein belongs to the SurE nucleotidase family. A divalent metal cation serves as cofactor.

Its subcellular location is the cytoplasm. The enzyme catalyses a ribonucleoside 5'-phosphate + H2O = a ribonucleoside + phosphate. Functionally, nucleotidase that shows phosphatase activity on nucleoside 5'-monophosphates. The polypeptide is 5'-nucleotidase SurE 2 (Thermus thermophilus (strain ATCC BAA-163 / DSM 7039 / HB27)).